The primary structure comprises 336 residues: GTP 3',8-cyclase (336 aa).

Residues Gly17–Asp238 enclose the Radical SAM core domain. Arg26 contacts GTP. Cys33 and Cys37 together coordinate [4Fe-4S] cluster. Position 39 (Tyr39) interacts with S-adenosyl-L-methionine. Cys40 is a binding site for [4Fe-4S] cluster. Arg75 contributes to the GTP binding site. Gly79 lines the S-adenosyl-L-methionine pocket. Residue Thr106 participates in GTP binding. Ser130 serves as a coordination point for S-adenosyl-L-methionine. Lys167 serves as a coordination point for GTP. Met201 contributes to the S-adenosyl-L-methionine binding site. 2 residues coordinate [4Fe-4S] cluster: Cys264 and Cys267. Residue Arg269–Arg271 participates in GTP binding. Cys281 serves as a coordination point for [4Fe-4S] cluster.

Belongs to the radical SAM superfamily. MoaA family. As to quaternary structure, monomer and homodimer. [4Fe-4S] cluster is required as a cofactor.

It carries out the reaction GTP + AH2 + S-adenosyl-L-methionine = (8S)-3',8-cyclo-7,8-dihydroguanosine 5'-triphosphate + 5'-deoxyadenosine + L-methionine + A + H(+). It functions in the pathway cofactor biosynthesis; molybdopterin biosynthesis. Its function is as follows. Catalyzes the cyclization of GTP to (8S)-3',8-cyclo-7,8-dihydroguanosine 5'-triphosphate. In Tolumonas auensis (strain DSM 9187 / NBRC 110442 / TA 4), this protein is GTP 3',8-cyclase.